A 185-amino-acid chain; its full sequence is MSNTASLKKEYADRIAPALKSQFQYSSTMQVPVLKKIVINQGLGMAVADKKIIEVAINEMTAITGQKAVATISRKDIANFKLRKKMPIGVMVTLRRERMYEFLEKLVRVALPRIRDFKGIESKFDGKGNYTLGIQEQIIFPEINIDSITRILGMNITFVTSAETDEEGYALLKEFGLPFKNAKKD.

It belongs to the universal ribosomal protein uL5 family. Part of the 50S ribosomal subunit; part of the 5S rRNA/L5/L18/L25 subcomplex. Contacts the 5S rRNA and the P site tRNA. Forms a bridge to the 30S subunit in the 70S ribosome.

Its function is as follows. This is one of the proteins that bind and probably mediate the attachment of the 5S RNA into the large ribosomal subunit, where it forms part of the central protuberance. In the 70S ribosome it contacts protein S13 of the 30S subunit (bridge B1b), connecting the 2 subunits; this bridge is implicated in subunit movement. Contacts the P site tRNA; the 5S rRNA and some of its associated proteins might help stabilize positioning of ribosome-bound tRNAs. The polypeptide is Large ribosomal subunit protein uL5 (Bacteroides thetaiotaomicron (strain ATCC 29148 / DSM 2079 / JCM 5827 / CCUG 10774 / NCTC 10582 / VPI-5482 / E50)).